We begin with the raw amino-acid sequence, 1356 residues long: Probable aldehyde oxidase 3 (1356 aa).

The region spanning 10–97 (RAVVVAVNGE…HCAVTTSEGI (88 aa)) is the 2Fe-2S ferredoxin-type domain. [2Fe-2S] cluster is bound by residues cysteine 49, cysteine 54, cysteine 57, and cysteine 79. One can recognise an FAD-binding PCMH-type domain in the interval 245–437 (VVVTGDGWFH…TFQTFRAAPR (193 aa)). The tract at residues 552-576 (NGSFTNGTANGIVDSSPEKHSNVDS) is disordered.

The protein belongs to the xanthine dehydrogenase family. Aldehyde oxidases (AO) are homodimers and heterodimers of AO subunits. It depends on [2Fe-2S] cluster as a cofactor. FAD serves as cofactor. The cofactor is Mo-molybdopterin.

It catalyses the reaction an aldehyde + O2 + H2O = a carboxylate + H2O2 + H(+). This Oryza sativa subsp. japonica (Rice) protein is Probable aldehyde oxidase 3.